A 238-amino-acid chain; its full sequence is Ribonuclease-like storage protein (238 aa).

A signal peptide spans 1-23 (MRAIYIISVIIVSLSIFSWGGNA). Glutamine 37 provides a ligand contact to RNA. A disulfide bridge links cysteine 43 with cysteine 49. RNA contacts are provided by residues histidine 61, phenylalanine 109, 112-113 (HE), and 116-117 (KH). Histidine 61 serves as the catalytic Proton donor. 2 cysteine pairs are disulfide-bonded: cysteine 76–cysteine 120 and cysteine 196–cysteine 207. Residue glutamate 113 is part of the active site. Histidine 117 (proton acceptor) is an active-site residue.

This sequence belongs to the RNase T2 family. Homodimer. As to expression, root.

May act as a storage protein providing a nitrogen source. Seems to have no RNase activity although it has conserved the active site residues. This chain is Ribonuclease-like storage protein, found in Panax ginseng (Korean ginseng).